A 1345-amino-acid polypeptide reads, in one-letter code: DNA-directed RNA polymerase subunit beta (1345 aa).

This sequence belongs to the RNA polymerase beta chain family. As to quaternary structure, the RNAP catalytic core consists of 2 alpha, 1 beta, 1 beta' and 1 omega subunit. When a sigma factor is associated with the core the holoenzyme is formed, which can initiate transcription.

It catalyses the reaction RNA(n) + a ribonucleoside 5'-triphosphate = RNA(n+1) + diphosphate. DNA-dependent RNA polymerase catalyzes the transcription of DNA into RNA using the four ribonucleoside triphosphates as substrates. In Shewanella oneidensis (strain ATCC 700550 / JCM 31522 / CIP 106686 / LMG 19005 / NCIMB 14063 / MR-1), this protein is DNA-directed RNA polymerase subunit beta.